The following is a 394-amino-acid chain: S-adenosylmethionine synthase 1 (394 aa).

Position 11 (Glu11) interacts with Mg(2+). Residue His17 participates in ATP binding. Glu45 is a K(+) binding site. L-methionine is bound by residues Glu58 and Gln101. Residues 169–171 (DGK), 237–240 (SGRF), Asp248, 254–255 (RK), Ala271, Lys275, and Lys279 contribute to the ATP site. Asp248 lines the L-methionine pocket. Lys279 lines the L-methionine pocket.

The protein belongs to the AdoMet synthase family. As to quaternary structure, homotetramer. Mn(2+) serves as cofactor. It depends on Mg(2+) as a cofactor. The cofactor is Co(2+). K(+) is required as a cofactor.

The protein localises to the cytoplasm. It catalyses the reaction L-methionine + ATP + H2O = S-adenosyl-L-methionine + phosphate + diphosphate. The protein operates within amino-acid biosynthesis; S-adenosyl-L-methionine biosynthesis; S-adenosyl-L-methionine from L-methionine: step 1/1. Its function is as follows. Catalyzes the formation of S-adenosylmethionine from methionine and ATP. The reaction comprises two steps that are both catalyzed by the same enzyme: formation of S-adenosylmethionine (AdoMet) and triphosphate, and subsequent hydrolysis of the triphosphate. The polypeptide is S-adenosylmethionine synthase 1 (SAMS1) (Triticum monococcum (Einkorn wheat)).